Reading from the N-terminus, the 62-residue chain is Large ribosomal subunit protein uL30 (62 aa).

The protein belongs to the universal ribosomal protein uL30 family. As to quaternary structure, part of the 50S ribosomal subunit.

The polypeptide is Large ribosomal subunit protein uL30 (Cereibacter sphaeroides (strain ATCC 17029 / ATH 2.4.9) (Rhodobacter sphaeroides)).